Reading from the N-terminus, the 533-residue chain is Intestinal-type alkaline phosphatase (533 aa).

The first 19 residues, 1-19 (MQGACVLLLLGLHLQLSLG), serve as a signal peptide directing secretion. A Mg(2+)-binding site is contributed by Asp-61. Positions 61 and 111 each coordinate Zn(2+). Ser-111 acts as the Phosphoserine intermediate in catalysis. A disulfide bond links Cys-140 and Cys-202. Ser-174 is a Mg(2+) binding site. Glu-235 is a binding site for Ca(2+). N-linked (GlcNAc...) asparagine glycosylation is present at Asn-268. Ca(2+)-binding residues include Phe-288, Glu-289, and Asp-304. Residue Glu-330 coordinates Mg(2+). Zn(2+) is bound by residues Asp-335, His-339, Asp-376, and His-377. Asn-429 carries an N-linked (GlcNAc...) asparagine glycan. His-451 contacts Zn(2+). Cys-486 and Cys-493 form a disulfide bridge. Asp-506 carries GPI-anchor amidated aspartate lipidation. Positions 507–533 (AAHLAASPPPLALLAGAMLLLLAPTLY) are cleaved as a propeptide — removed in mature form.

This sequence belongs to the alkaline phosphatase family. As to quaternary structure, homodimer. It depends on Mg(2+) as a cofactor. Requires Zn(2+) as cofactor. Ca(2+) is required as a cofactor.

It localises to the cell membrane. It carries out the reaction a phosphate monoester + H2O = an alcohol + phosphate. Functionally, alkaline phosphatase that can hydrolyze various phosphate compounds. The polypeptide is Intestinal-type alkaline phosphatase (ALPI) (Bos taurus (Bovine)).